The sequence spans 103 residues: Large ribosomal subunit protein bL21 (103 aa).

The protein belongs to the bacterial ribosomal protein bL21 family. As to quaternary structure, part of the 50S ribosomal subunit. Contacts protein L20.

In terms of biological role, this protein binds to 23S rRNA in the presence of protein L20. This Vibrio cholerae serotype O1 (strain ATCC 39541 / Classical Ogawa 395 / O395) protein is Large ribosomal subunit protein bL21.